The primary structure comprises 188 residues: F7-2 fimbrial protein (188 aa).

The signal sequence occupies residues 1 to 21 (MIKSVIAGAVAMAVVSFGAYA). Cysteines 43 and 82 form a disulfide.

This sequence belongs to the fimbrial protein family.

The protein localises to the fimbrium. Fimbriae (also called pili), polar filaments radiating from the surface of the bacterium to a length of 0.5-1.5 micrometers and numbering 100-300 per cell, enable bacteria to colonize the epithelium of specific host organs. The protein is F7-2 fimbrial protein (F7-2) of Escherichia coli O6:H1 (strain CFT073 / ATCC 700928 / UPEC).